A 1235-amino-acid polypeptide reads, in one-letter code: N-acetylglucosamine-1-phosphotransferase subunits alpha/beta (1235 aa).

The helical transmembrane segment at 22 to 42 (VCFVGVVVTIVSAFQFGEVVL) threads the bilayer. Residues N83, N114, N148, and N179 are each glycosylated (N-linked (GlcNAc...) asparagine). 4 cysteine pairs are disulfide-bonded: C438-C461, C452-C468, C505-C528, and C519-C535. LNR repeat units lie at residues 438–473 (CAEG…GNTA) and 505–545 (CNQG…ELYK). D449, D464, D467, D516, D531, and D534 together coordinate Ca(2+). 2 N-linked (GlcNAc...) asparagine glycosylation sites follow: N614 and N729. The DMAP1-binding domain occupies 699 to 823 (NISLLPKEAQ…AQPTLGVTVS (125 aa)). Disordered regions lie at residues 751 to 783 (QART…HRSE) and 830 to 850 (LIVP…AEGN). Over residues 837–848 (HLPKEEESDRAE) the composition is skewed to basic and acidic residues. One can recognise an EF-hand domain in the interval 984–1019 (VQPLNISQVFHEVDTDQSGVLSDREIRTLATRIHDL). The N-linked (GlcNAc...) asparagine glycan is linked to N988. Ca(2+) is bound by residues D997, D999, S1001, and E1008. N1108 carries N-linked (GlcNAc...) asparagine glycosylation. A helical membrane pass occupies residues 1194 to 1214 (VLATLIIFTIFSFFAEQIIAL).

Belongs to the stealth family. In terms of assembly, hexamer of two alpha, two beta and two gamma (GNPTG) subunits; disulfide-linked. The alpha and/or the beta subunits of the enzyme constitute the catalytic subunits. Interacts with LYSET; facilitates proper localization of GNPTAB. The alpha- and beta-subunits are generated by a proteolytic cleavage by MBTPS1 protease at the Lys-907-Asp-908 bond.

Its subcellular location is the golgi apparatus membrane. It catalyses the reaction N(4)-[alpha-D-mannosyl-(1-&gt;2)-alpha-D-mannosyl-(glycan)]-L-asparaginyl-[protein] + UDP-N-acetyl-alpha-D-glucosamine = N(4)-[6-(N-acetyl-alpha-D-glucosaminyl-1-phospho)-alpha-D-mannosyl-(1-&gt;2)-alpha-D-mannosyl-(glycan)]-L-asparaginyl-[protein] + UMP + H(+). Its function is as follows. Catalyzes the formation of mannose 6-phosphate (M6P) markers on high mannose type oligosaccharides in the Golgi apparatus. M6P residues are required to bind to the M6P receptors (MPR), which mediate the vesicular transport of lysosomal enzymes to the endosomal/prelysosomal compartment. In Mus musculus (Mouse), this protein is N-acetylglucosamine-1-phosphotransferase subunits alpha/beta (Gnptab).